A 143-amino-acid polypeptide reads, in one-letter code: Transcriptional regulator MraZ (143 aa).

SpoVT-AbrB domains follow at residues 5–47 (THHP…PRAE) and 76–119 (TDEQ…NAER).

Belongs to the MraZ family. In terms of assembly, forms oligomers.

Its subcellular location is the cytoplasm. It is found in the nucleoid. The polypeptide is Transcriptional regulator MraZ (Saccharopolyspora erythraea (strain ATCC 11635 / DSM 40517 / JCM 4748 / NBRC 13426 / NCIMB 8594 / NRRL 2338)).